The following is a 1983-amino-acid chain: Nonribosomal peptide synthetase verP (1983 aa).

The interval 11 to 405 (FAQAASRCPD…FRGRKDRTVK (395 aa)) is adenylation 1. In terms of domain architecture, Carrier 1 spans 526-602 (DRHLDTLLTV…DVAPLITSRA (77 aa)). Ser-563 carries the O-(pantetheine 4'-phosphoryl)serine modification. Residues 769 to 1047 (ETDELTVVLT…GQHFKHALYS (279 aa)) are condensation 1. Residues 1089–1469 (QVMGQFPSLI…GRIDRLVKLR (381 aa)) are adenylation 2. Residues 1584 to 1662 (ITRPKIEDKL…DQINMVRALL (79 aa)) enclose the Carrier 2 domain. Ser-1622 is modified (O-(pantetheine 4'-phosphoryl)serine). The segment at 1652-1976 (KDQINMVRAL…GGLEHPLFEC (325 aa)) is condensation 2.

Belongs to the NRP synthetase family.

It functions in the pathway mycotoxin biosynthesis. In terms of biological role, nonribosomal peptide synthetase; part of the gene cluster that mediates the biosynthesis of 11'-deoxyverticillin A, one of the dimeric epipolythiodioxopiperazines (ETPs) from the verticillin family that act as mycotoxins. 11'-deoxyverticillin A is required for normal conidiation. The nonribosomal peptide synthetase verP is speculated to be responsible for condensation of amino acids to form the carbon skeleton of verticillin, whereas the cluster-specific tailoring enzymes are involved in further modifications leading to the production of 11'-deoxyverticillin A. In Clonostachys rogersoniana, this protein is Nonribosomal peptide synthetase verP.